A 173-amino-acid chain; its full sequence is Mesencephalic astrocyte-derived neurotrophic factor homolog (173 aa).

The N-terminal stretch at Met1–Ala22 is a signal peptide. Intrachain disulfides connect Cys28-Cys114, Cys31-Cys103, Cys61-Cys72, and Cys148-Cys151.

Belongs to the ARMET family.

It is found in the secreted. In terms of biological role, required during the maturation of the embryonic nervous system for maintenance of neuronal and cuticular connectivity. Essential for maintenance of dopaminergic neurons and dopamine levels. This chain is Mesencephalic astrocyte-derived neurotrophic factor homolog, found in Drosophila sechellia (Fruit fly).